Consider the following 245-residue polypeptide: Probable transcriptional regulatory protein pc1328 (245 aa).

Belongs to the TACO1 family.

It is found in the cytoplasm. This chain is Probable transcriptional regulatory protein pc1328, found in Protochlamydia amoebophila (strain UWE25).